Here is a 110-residue protein sequence, read N- to C-terminus: Insulin (110 aa).

The N-terminal stretch at 1-24 (MASLAALLPLLALLVLCRLDPAQA) is a signal peptide. Disulfide bonds link cysteine 31/cysteine 96, cysteine 43/cysteine 109, and cysteine 95/cysteine 100. The propeptide at 57–87 (EVEELQVGQAELGGGPGAGGLQPSALELALQ) is c peptide.

It belongs to the insulin family. As to quaternary structure, heterodimer of a B chain and an A chain linked by two disulfide bonds.

Its subcellular location is the secreted. Functionally, insulin decreases blood glucose concentration. It increases cell permeability to monosaccharides, amino acids and fatty acids. It accelerates glycolysis, the pentose phosphate cycle, and glycogen synthesis in liver. The protein is Insulin (INS) of Oryctolagus cuniculus (Rabbit).